The sequence spans 374 residues: Methylthioribose-1-phosphate isomerase (374 aa).

D256 acts as the Proton donor in catalysis.

It belongs to the eIF-2B alpha/beta/delta subunits family. MtnA subfamily.

It localises to the cytoplasm. Its subcellular location is the nucleus. The catalysed reaction is 5-(methylsulfanyl)-alpha-D-ribose 1-phosphate = 5-(methylsulfanyl)-D-ribulose 1-phosphate. It functions in the pathway amino-acid biosynthesis; L-methionine biosynthesis via salvage pathway; L-methionine from S-methyl-5-thio-alpha-D-ribose 1-phosphate: step 1/6. In terms of biological role, catalyzes the interconversion of methylthioribose-1-phosphate (MTR-1-P) into methylthioribulose-1-phosphate (MTRu-1-P). The protein is Methylthioribose-1-phosphate isomerase of Leishmania braziliensis.